The sequence spans 570 residues: Potassium-transporting ATPase potassium-binding subunit (570 aa).

Transmembrane regions (helical) follow at residues 7 to 27 (AEIA…GVFL), 65 to 85 (AYAL…YAVL), 95 to 115 (PQGF…SFIT), 135 to 155 (LVLT…AAAL), 179 to 199 (LYLL…LGLP), 254 to 274 (LTNL…FFAF), 286 to 306 (ALVI…YATE), 383 to 403 (GVAI…LMVG), 422 to 442 (ILAV…AAVL), 489 to 509 (LGIA…AIAG), and 528 to 548 (GGLF…LQFF).

The protein belongs to the KdpA family. As to quaternary structure, the system is composed of three essential subunits: KdpA, KdpB and KdpC.

The protein resides in the cell inner membrane. Part of the high-affinity ATP-driven potassium transport (or Kdp) system, which catalyzes the hydrolysis of ATP coupled with the electrogenic transport of potassium into the cytoplasm. This subunit binds the periplasmic potassium ions and delivers the ions to the membrane domain of KdpB through an intramembrane tunnel. The chain is Potassium-transporting ATPase potassium-binding subunit from Caulobacter vibrioides (strain ATCC 19089 / CIP 103742 / CB 15) (Caulobacter crescentus).